Here is a 448-residue protein sequence, read N- to C-terminus: Divalent metal cation transporter MntH (448 aa).

Positions 1 to 10 are enriched in basic and acidic residues; the sequence is MKKDKTERTK. Residues 1–20 are disordered; it reads MKKDKTERTKQSWRKAQNAP. The next 11 helical transmembrane spans lie at 41 to 61, 69 to 89, 117 to 137, 147 to 167, 176 to 196, 215 to 235, 270 to 290, 307 to 327, 363 to 383, 384 to 404, and 424 to 444; these read LFAF…PGNW, SEFG…AVLL, GFVL…AEVI, FGIP…LVLF, IEVI…AEMV, IVTN…TVMP, FSLT…AAAF, LLNP…ALLA, VLAI…GINE, LLIF…IPLV, and IISW…LFYT.

This sequence belongs to the NRAMP family.

Its subcellular location is the cell membrane. Its function is as follows. H(+)-stimulated, divalent metal cation uptake system. This chain is Divalent metal cation transporter MntH, found in Listeria monocytogenes serotype 4b (strain CLIP80459).